A 1349-amino-acid polypeptide reads, in one-letter code: MFFILLITLPSVFAVIGDLKCNTSSINDVDTGVPSISSEVVDVTNGLGTFYVLDRVYLNTTLLLNGYYPISGATFRNVALKGTRLLSTLWFKPPFLSPFNDGIFAKVKNSRFSKHGVIYSEFPAITIGSTFVNTSYSIVVKPHTSFINGNLQGFLQISVCQYTMCEYPQTICHPNLGNQRIELWHHDTDVVSCLYRRNFTYDVNADYLYFHFYQEGGTFYAYFTDTGFVTKFLFKLYLGTVLSHYYVMPLTCDSALSLEYWVTPLTTRQFLLAFDQDGVLYHAVDCASDFMSEIMCKTSSITPPTGVYELNGYTVQPVATVYRRIPDLPNCDIEAWLNSKTVSSPLNWERKIFSNCNFNMGRLMSFIQADSFGCNNIDASRLYGMCFGSITIDKFAIPNSRKVDLQVGKSGYLQSFNYKIDTAVSSCQLYYSLPAANVSVTHYNPSSWNRRYGFINQSFGSRGLHDAVYSQQCFNTPNTYCPCRTSQCIGGAGTGTCPVGTTVRKCFAAVTNATKCTCWCQPDPSTYKGVNAWTCPQSKVSIQPGQHCPGLGLVEDDCSGNPCTCKPQAFIGWSSETCLQNGRCNIFANFILNDVNSGTTCSTDLQQGNTNITTDVCVNYDLYGITGQGILIEVNATYYNSWQNLLYDSSGNLYGFRDYLSNRTFLIRSCYSGRVSAVFHANSSEPALMFRNLKCSHVFNYTILRQIQLVNYFDSYLGCVVNAYNNTASAVSTCDLTVGSGYCVDYVTALRSRRSFTTGYRFTNFEPFAANLVNDSIEPVGGLYEIQIPSEFTIGNLEEFIQTSSPKVTIDCATFVCGDYAACRQQLAEYGSFCENINAILIEVNELLDTTQLQVANSLMNGVTLSTKIKDGINFNVDDINFSSVLGCLGSECNRASTRSAIEDLLFDKVKLSDVGFVQAYNNCTGGAEIRDLICVQSYNGIKVLPPLLSENQISGYTSAATAASLFPPWTAAAGVPFYLNVQYRINGLGVTMDVLSQNQKLIASAFNNALDSIQEGFDATNSALVKIQAVVNANAEALNNLLQQLSNRFGAISASLQEILSRLDALEAKAQIDRLINGRLTALNAYVSQQLSDSTLVKFSAAQAIEKVNECVKSQSSRINFCGNGNHIISLVQNAPYGLYFIHFSYVPTKYVTAKVSPGLCIAGDIGISPKSGYFINVNNSWMFTGSGYYYPEPITQNNVVVMSTCAVNYTKAPDLMLNTSTPNLPDFKEELYQWFKNQSSLAPDLSFDYINVTFLDLQDEMNRLQEAIKVLNHSYINLKDIGTYEYYVKWPWYVWLLICLAGVVMLVLLFFICCCTGCGTSCFKKCGGCFDDYTGHQEFVIKTSHDD.

Residues 1 to 13 (MFFILLITLPSVF) form the signal peptide. The Extracellular segment spans residues 14–1293 (AVIGDLKCNT…GTYEYYVKWP (1280 aa)). Positions 15–298 (VIGDLKCNTS…DFMSEIMCKT (284 aa)) constitute a BetaCoV S1-NTD domain. Intrachain disulfides connect cysteine 21/cysteine 165, cysteine 160/cysteine 193, cysteine 172/cysteine 252, cysteine 286/cysteine 296, cysteine 331/cysteine 356, cysteine 374/cysteine 427, and cysteine 386/cysteine 601. Residues asparagine 22, asparagine 59, and asparagine 133 are each glycosylated (N-linked (GlcNAc...) asparagine; by host). Asparagine 198 carries N-linked (GlcNAc...) asparagine; by host glycosylation. One can recognise a BetaCoV S1-CTD domain in the interval 329-603 (PNCDIEAWLN…DVNSGTTCST (275 aa)). Asparagine 437, asparagine 456, asparagine 512, asparagine 611, asparagine 635, asparagine 662, asparagine 682, asparagine 700, asparagine 725, asparagine 774, and asparagine 881 each carry an N-linked (GlcNAc...) asparagine; by host glycan. Fusion peptide regions lie at residues 900 to 921 (SAIE…VQAY) and 919 to 939 (QAYN…VQSY). The N-linked (GlcNAc...) asparagine; by host glycan is linked to asparagine 923. Cysteines 924 and 935 form a disulfide. Residues 1000–1050 (QKLIASAFNNALDSIQEGFDATNSALVKIQAVVNANAEALNNLLQQLSNRF) are heptad repeat 1. The stretch at 1029–1073 (QAVVNANAEALNNLLQQLSNRFGAISASLQEILSRLDALEAKAQI) forms a coiled coil. N-linked (GlcNAc...) asparagine; by host glycosylation is found at asparagine 1180, asparagine 1210, asparagine 1220, asparagine 1239, asparagine 1253, and asparagine 1274. The interval 1244–1282 (APDLSFDYINVTFLDLQDEMNRLQEAIKVLNHSYINLKD) is heptad repeat 2. A coiled-coil region spans residues 1255-1283 (TFLDLQDEMNRLQEAIKVLNHSYINLKDI). The helical transmembrane segment at 1294–1314 (WYVWLLICLAGVVMLVLLFFI) threads the bilayer. The Cytoplasmic portion of the chain corresponds to 1315 to 1349 (CCCTGCGTSCFKKCGGCFDDYTGHQEFVIKTSHDD). The short motif at 1345 to 1349 (TSHDD) is the KxHxx element.

Belongs to the betacoronaviruses spike protein family. In terms of assembly, homotrimer; each monomer consists of a S1 and a S2 subunit. The resulting peplomers protrude from the virus surface as spikes. Post-translationally, specific enzymatic cleavages in vivo yield mature proteins. The precursor is processed into S1 and S2 by host cell furin or another cellular protease to yield the mature S1 and S2 proteins. Additionally, a second cleavage leads to the release of a fusion peptide after viral attachment to host cell receptor. The cytoplasmic Cys-rich domain is palmitoylated. Spike glycoprotein is digested within host endosomes.

Its subcellular location is the virion membrane. The protein resides in the host endoplasmic reticulum-Golgi intermediate compartment membrane. It is found in the host cell membrane. Attaches the virion to the cell membrane by interacting with host receptor, initiating the infection. Functionally, mediates fusion of the virion and cellular membranes by acting as a class I viral fusion protein. Under the current model, the protein has at least three conformational states: pre-fusion native state, pre-hairpin intermediate state, and post-fusion hairpin state. During viral and target cell membrane fusion, the coiled coil regions (heptad repeats) assume a trimer-of-hairpins structure, positioning the fusion peptide in close proximity to the C-terminal region of the ectodomain. The formation of this structure appears to drive apposition and subsequent fusion of viral and target cell membranes. In terms of biological role, acts as a viral fusion peptide which is unmasked following S2 cleavage occurring upon virus endocytosis. This is Spike glycoprotein from Porcine hemagglutinating encephalomyelitis virus (strain IAF-404) (HEV).